The following is a 287-amino-acid chain: uncharacterized protein (287 aa).

2 helical membrane passes run 12-32 (IILLFGMLVFLVLLGLGGAAL) and 217-237 (YTIGAITLVSVSGGVLAVLIV).

The protein resides in the cell membrane. This is an uncharacterized protein from Mycoplasma pneumoniae (strain ATCC 29342 / M129 / Subtype 1) (Mycoplasmoides pneumoniae).